Here is a 290-residue protein sequence, read N- to C-terminus: Xyloglucan endotransglycosylase/hydrolase protein 8 (290 aa).

An N-terminal signal peptide occupies residues 1-25 (MAKHLALSVAAAVAVSWLAASSAAA). A GH16 domain is found at 26 to 218 (AGFYEKFDVV…WSGAPFVVSY (193 aa)). The active-site Nucleophile is glutamate 106. Glutamate 110 serves as the catalytic Proton donor. Position 110 (glutamate 110) interacts with xyloglucan. Asparagine 114 carries an N-linked (GlcNAc...) asparagine glycan. Residues 123 to 125 (NTN), 133 to 135 (KKE), and 197 to 198 (YW) contribute to the xyloglucan site. 2 cysteine pairs are disulfide-bonded: cysteine 226-cysteine 240 and cysteine 273-cysteine 287. Arginine 278 provides a ligand contact to xyloglucan.

The protein belongs to the glycosyl hydrolase 16 family. XTH group 2 subfamily. Post-translationally, contains at least one intrachain disulfide bond essential for its enzymatic activity. As to expression, transcript strongly detected in leaf sheaths. Weakly or not expressed in leaf blades, roots and calli. Accumulation of transcript detected in shoot apex meristem, vascular tissues, young leaves, vascular bundles of leaf sheaths, and peripheral cylinder of the vascular bundles and fibers in the nodal region.

The protein localises to the secreted. The protein resides in the cell wall. It is found in the extracellular space. Its subcellular location is the apoplast. The enzyme catalyses breaks a beta-(1-&gt;4) bond in the backbone of a xyloglucan and transfers the xyloglucanyl segment on to O-4 of the non-reducing terminal glucose residue of an acceptor, which can be a xyloglucan or an oligosaccharide of xyloglucan.. Catalyzes xyloglucan endohydrolysis (XEH) and/or endotransglycosylation (XET). Cleaves and religates xyloglucan polymers, an essential constituent of the primary cell wall, and thereby participates in cell wall construction of growing tissues. May promote elongation of three internodes (II, III and IV) and may be involved in cell elongation processes. The chain is Xyloglucan endotransglycosylase/hydrolase protein 8 (XTH8) from Oryza sativa subsp. japonica (Rice).